A 331-amino-acid chain; its full sequence is tRNA-cytidine(32) 2-sulfurtransferase (331 aa).

The disordered stretch occupies residues 1–31 (MNAPHMNDTTADAATLDATAAPAGRPALTRR). Positions 8–23 (DTTADAATLDATAAPA) are enriched in low complexity. The short motif at 71–76 (SGGKDS) is the PP-loop motif element. [4Fe-4S] cluster is bound by residues cysteine 146, cysteine 149, and cysteine 237.

The protein belongs to the TtcA family. In terms of assembly, homodimer. Mg(2+) serves as cofactor. [4Fe-4S] cluster is required as a cofactor.

The protein localises to the cytoplasm. It carries out the reaction cytidine(32) in tRNA + S-sulfanyl-L-cysteinyl-[cysteine desulfurase] + AH2 + ATP = 2-thiocytidine(32) in tRNA + L-cysteinyl-[cysteine desulfurase] + A + AMP + diphosphate + H(+). It participates in tRNA modification. Catalyzes the ATP-dependent 2-thiolation of cytidine in position 32 of tRNA, to form 2-thiocytidine (s(2)C32). The sulfur atoms are provided by the cysteine/cysteine desulfurase (IscS) system. The protein is tRNA-cytidine(32) 2-sulfurtransferase of Burkholderia lata (strain ATCC 17760 / DSM 23089 / LMG 22485 / NCIMB 9086 / R18194 / 383).